The following is a 207-amino-acid chain: uncharacterized protein (207 aa).

In terms of domain architecture, YrdC-like spans 14 to 201 (ARLINQAVEI…SPVILREGSG (188 aa)).

It belongs to the SUA5 family.

This is an uncharacterized protein from Haemophilus influenzae (strain ATCC 51907 / DSM 11121 / KW20 / Rd).